The primary structure comprises 397 residues: DNA excision repair protein ERCC-8 (397 aa).

WD repeat units follow at residues 41 to 81 (IHGS…RQPH), 97 to 137 (VHKY…AADV), 184 to 224 (GHRQ…GCLL), 243 to 282 (AHNG…NTLV), and 332 to 371 (GHYK…PVPD). Phosphoserine is present on residues serine 391, serine 392, and serine 393.

In terms of assembly, part of the CSA complex (also named DCX(ERCC8) complex), a DCX E3 ubiquitin-protein ligase complex containing ERCC8, RBX1, DDB1 and CUL4A; the CSA complex interacts with RNA polymerase II; upon UV irradiation it interacts with the COP9 signalosome and preferentially with the hyperphosphorylated form of RNA polymerase II. Interacts with ERCC6/CSB (via CIM motif); promoting recruitment to lesion-stalled RNA polymerase II (Pol II). Interacts with KIAA1530/UVSSA. Interacts with a subunit of RNA polymerase II TFIIH.

The protein localises to the nucleus. It localises to the chromosome. It is found in the nucleus matrix. The protein operates within protein modification; protein ubiquitination. Substrate-recognition component of the CSA complex, a DCX (DDB1-CUL4-X-box) E3 ubiquitin-protein ligase complex, involved in transcription-coupled nucleotide excision repair (TC-NER), a process during which RNA polymerase II-blocking lesions are rapidly removed from the transcribed strand of active genes. Following recruitment to lesion-stalled RNA polymerase II (Pol II), the CSA complex mediates ubiquitination of Pol II subunit POLR2A/RPB1 at 'Lys-1268', a critical TC-NER checkpoint, governing RNA Pol II stability and initiating DNA damage excision by TFIIH recruitment. The CSA complex also promotes the ubiquitination and subsequent proteasomal degradation of ERCC6/CSB in a UV-dependent manner; ERCC6 degradation is essential for the recovery of RNA synthesis after transcription-coupled repair. Also plays a role in DNA double-strand breaks (DSSBs) repair by non-homologous end joining (NHEJ). The protein is DNA excision repair protein ERCC-8 of Mus musculus (Mouse).